Consider the following 664-residue polypeptide: UvrABC system protein B (664 aa).

The region spanning 23-180 (EGLNRGMRFQ…ERLARIGYQR (158 aa)) is the Helicase ATP-binding domain. 36 to 43 (GVTGSGKT) is a binding site for ATP. Positions 89-112 (YYDYYQPEAYIPTKDLYIEKNADI) match the Beta-hairpin motif. Residues 429–588 (DLVNEIVKVK…ITPRSVIKPL (160 aa)) form the Helicase C-terminal domain. In terms of domain architecture, UVR spans 622–657 (EEYMAVLEEEMYRAASELRYEDAAALRDELFRIREE).

The protein belongs to the UvrB family. As to quaternary structure, forms a heterotetramer with UvrA during the search for lesions. Interacts with UvrC in an incision complex.

The protein resides in the cytoplasm. Its function is as follows. The UvrABC repair system catalyzes the recognition and processing of DNA lesions. A damage recognition complex composed of 2 UvrA and 2 UvrB subunits scans DNA for abnormalities. Upon binding of the UvrA(2)B(2) complex to a putative damaged site, the DNA wraps around one UvrB monomer. DNA wrap is dependent on ATP binding by UvrB and probably causes local melting of the DNA helix, facilitating insertion of UvrB beta-hairpin between the DNA strands. Then UvrB probes one DNA strand for the presence of a lesion. If a lesion is found the UvrA subunits dissociate and the UvrB-DNA preincision complex is formed. This complex is subsequently bound by UvrC and the second UvrB is released. If no lesion is found, the DNA wraps around the other UvrB subunit that will check the other stand for damage. This Thermotoga petrophila (strain ATCC BAA-488 / DSM 13995 / JCM 10881 / RKU-1) protein is UvrABC system protein B.